The primary structure comprises 262 residues: NADPH-dependent 7-cyano-7-deazaguanine reductase (262 aa).

69–71 (IES) contributes to the substrate binding site. 71–72 (SK) contributes to the NADPH binding site. Catalysis depends on cysteine 170, which acts as the Thioimide intermediate. Aspartate 177 (proton donor) is an active-site residue. Residue 209–210 (HE) participates in substrate binding. 238–239 (RG) lines the NADPH pocket.

It belongs to the GTP cyclohydrolase I family. QueF type 2 subfamily. Homodimer.

It is found in the cytoplasm. It catalyses the reaction 7-aminomethyl-7-carbaguanine + 2 NADP(+) = 7-cyano-7-deazaguanine + 2 NADPH + 3 H(+). The protein operates within tRNA modification; tRNA-queuosine biosynthesis. In terms of biological role, catalyzes the NADPH-dependent reduction of 7-cyano-7-deazaguanine (preQ0) to 7-aminomethyl-7-deazaguanine (preQ1). The chain is NADPH-dependent 7-cyano-7-deazaguanine reductase from Buchnera aphidicola subsp. Schizaphis graminum (strain Sg).